Consider the following 837-residue polypeptide: Protein translocase subunit SecA (837 aa).

ATP is bound by residues Q85, 103-107 (GEGKT), and D493. Zn(2+) contacts are provided by C821, C823, C832, and H833.

Belongs to the SecA family. Monomer and homodimer. Part of the essential Sec protein translocation apparatus which comprises SecA, SecYEG and auxiliary proteins SecDF. Other proteins may also be involved. Requires Zn(2+) as cofactor.

The protein resides in the cell membrane. It is found in the cytoplasm. The catalysed reaction is ATP + H2O + cellular proteinSide 1 = ADP + phosphate + cellular proteinSide 2.. In terms of biological role, part of the Sec protein translocase complex. Interacts with the SecYEG preprotein conducting channel. Has a central role in coupling the hydrolysis of ATP to the transfer of proteins into and across the cell membrane, serving as an ATP-driven molecular motor driving the stepwise translocation of polypeptide chains across the membrane. The protein is Protein translocase subunit SecA of Streptococcus pneumoniae (strain Taiwan19F-14).